Here is a 932-residue protein sequence, read N- to C-terminus: Isoleucine--tRNA ligase (932 aa).

A 'HIGH' region motif is present at residues 57-67 (PYANGDIHMGH). L-isoleucyl-5'-AMP is bound at residue glutamate 556. The 'KMSKS' region motif lies at 597 to 601 (KMSKS). Lysine 600 provides a ligand contact to ATP. 4 residues coordinate Zn(2+): cysteine 891, cysteine 894, cysteine 911, and cysteine 914.

The protein belongs to the class-I aminoacyl-tRNA synthetase family. IleS type 1 subfamily. Monomer. Zn(2+) serves as cofactor.

The protein resides in the cytoplasm. The enzyme catalyses tRNA(Ile) + L-isoleucine + ATP = L-isoleucyl-tRNA(Ile) + AMP + diphosphate. Functionally, catalyzes the attachment of isoleucine to tRNA(Ile). As IleRS can inadvertently accommodate and process structurally similar amino acids such as valine, to avoid such errors it has two additional distinct tRNA(Ile)-dependent editing activities. One activity is designated as 'pretransfer' editing and involves the hydrolysis of activated Val-AMP. The other activity is designated 'posttransfer' editing and involves deacylation of mischarged Val-tRNA(Ile). The sequence is that of Isoleucine--tRNA ligase from Lactiplantibacillus plantarum (strain ATCC BAA-793 / NCIMB 8826 / WCFS1) (Lactobacillus plantarum).